Here is a 490-residue protein sequence, read N- to C-terminus: Betaine aldehyde dehydrogenase (490 aa).

K(+) is bound at residue D93. Residue 150–152 participates in NAD(+) binding; sequence GAW. K162 (charge relay system) is an active-site residue. An NAD(+)-binding site is contributed by 176–179; it reads KPSE. V180 serves as a coordination point for K(+). 230 to 233 contacts NAD(+); sequence GIAS. L246 is a K(+) binding site. E252 serves as the catalytic Proton acceptor. NAD(+)-binding residues include G254, C286, and E387. Residue C286 is the Nucleophile of the active site. Cysteine sulfenic acid (-SOH) is present on C286. The K(+) site is built by K457 and G460. The active-site Charge relay system is the E464.

The protein belongs to the aldehyde dehydrogenase family. In terms of assembly, dimer of dimers. K(+) is required as a cofactor.

It carries out the reaction betaine aldehyde + NAD(+) + H2O = glycine betaine + NADH + 2 H(+). It functions in the pathway amine and polyamine biosynthesis; betaine biosynthesis via choline pathway; betaine from betaine aldehyde: step 1/1. Its function is as follows. Involved in the biosynthesis of the osmoprotectant glycine betaine. Catalyzes the irreversible oxidation of betaine aldehyde to the corresponding acid. This chain is Betaine aldehyde dehydrogenase, found in Yersinia pseudotuberculosis serotype O:3 (strain YPIII).